Reading from the N-terminus, the 83-residue chain is Putative membrane protein insertion efficiency factor (83 aa).

This sequence belongs to the UPF0161 family.

It is found in the cell membrane. Could be involved in insertion of integral membrane proteins into the membrane. The sequence is that of Putative membrane protein insertion efficiency factor from Streptococcus thermophilus (strain ATCC BAA-250 / LMG 18311).